A 54-amino-acid polypeptide reads, in one-letter code: Large ribosomal subunit protein bL32c (54 aa).

Residues 1–20 form a disordered region; the sequence is MAVPKKKMSKSRRNSRKSNW.

This sequence belongs to the bacterial ribosomal protein bL32 family.

It is found in the plastid. It localises to the chloroplast. This is Large ribosomal subunit protein bL32c (rpl32) from Euglena gracilis.